The following is a 124-amino-acid chain: Apolipoprotein C-IV (124 aa).

Positions 1 to 27 (MLLPRRGLRTLPSLCLYILVLVWVVAC) are cleaved as a signal peptide.

Belongs to the apolipoprotein C4 family. Post-translationally, glycosylated; contains sialic acid. Present in up to five sialylated isoforms. Blood plasma, associated primarily with VLDL and HDL. Expressed mainly in the liver.

It localises to the secreted. In terms of biological role, may participate in lipoprotein metabolism. The protein is Apolipoprotein C-IV (APOC4) of Oryctolagus cuniculus (Rabbit).